A 274-amino-acid chain; its full sequence is Carbonic anhydrase (274 aa).

Residues cysteine 39, histidine 98, and cysteine 101 each contribute to the Zn(2+) site. A disordered region spans residues 214–274 (EDEYAPHPNS…QAERIYRGSR (61 aa)). Basic and acidic residues-rich tracts occupy residues 234 to 245 (PGKERPGREKAT) and 261 to 274 (LPRE…RGSR).

Belongs to the beta-class carbonic anhydrase family. As to quaternary structure, a hexamer formed by a trimer of dimers. Interacts with the first 260 residues of CcmM; both the N-terminal 206 residues and the C-terminal tail contribute to CcmM binding. Interacts with full-length and the N-terminal 249 residues of CcmM. A probable CcmM-CcaA-CcmN complex as well as a CcaA-RuBisCO-CcmM complex can also be isolated. Requires Zn(2+) as cofactor.

The protein localises to the carboxysome. It carries out the reaction hydrogencarbonate + H(+) = CO2 + H2O. With respect to regulation, inhibited by ethoxyzolamide. In terms of biological role, reversible hydration of carbon dioxide. Essential to photosynthetic carbon dioxide fixation, supplies CO(2) to RuBisCO (ribulose bisphosphate carboxylase, rbcL-rbcS) in the carboxysome. The sequence is that of Carbonic anhydrase from Synechocystis sp. (strain ATCC 27184 / PCC 6803 / Kazusa).